Reading from the N-terminus, the 631-residue chain is Glutamyl-tRNA(Gln) amidotransferase subunit E (631 aa).

Belongs to the GatB/GatE family. GatE subfamily. As to quaternary structure, heterodimer of GatD and GatE.

The catalysed reaction is L-glutamyl-tRNA(Gln) + L-glutamine + ATP + H2O = L-glutaminyl-tRNA(Gln) + L-glutamate + ADP + phosphate + H(+). In terms of biological role, allows the formation of correctly charged Gln-tRNA(Gln) through the transamidation of misacylated Glu-tRNA(Gln) in organisms which lack glutaminyl-tRNA synthetase. The reaction takes place in the presence of glutamine and ATP through an activated gamma-phospho-Glu-tRNA(Gln). The GatDE system is specific for glutamate and does not act on aspartate. The protein is Glutamyl-tRNA(Gln) amidotransferase subunit E of Methanococcus maripaludis (strain C6 / ATCC BAA-1332).